The sequence spans 1174 residues: Ankyrin repeat and LEM domain-containing protein 2 homolog (1174 aa).

Composition is skewed to low complexity over residues 37-56, 150-164, 174-198, and 205-219; these read NPASGSASVASGSPSGSAAS, SSPTSTDNSCSSSPT, LGSNSSMSNLLLSDSPTSSPSSSSN, and QQQMQQQQQQQPQQP. Disordered stretches follow at residues 37 to 74 and 141 to 230; these read NPASGSASVASGSPSGSAASVQTGNADDGSAATKYEDP and PIIS…PFRA. One copy of the ANK repeat lies at 338 to 367; that stretch reads RGETPLHFAAKNGHVAMVEVLVSYPECKSL. 2 disordered regions span residues 519–543 and 961–981; these read AEATSSPKPTKNVPNGTNECEHNNN and GSSSEDEENFRTPPQSLSPGI. A compositionally biased stretch (polar residues) spans 521 to 532; it reads ATSSPKPTKNVP. Residues 533–543 are compositionally biased toward low complexity; that stretch reads NGTNECEHNNN.

It belongs to the ANKLE2 family.

The protein localises to the endoplasmic reticulum. The protein resides in the nucleus envelope. Its subcellular location is the cytoplasm. Involved in brain development probably by regulating asymmetric division of neuroblasts. Regulates neuroblast asymmetric cell division by controlling asymmetric protein localization of Mira, Baz, Par-6 and aPKC, and spindle alignment. Also, regulates the localization of kinase Ball during mitosis, specifically maintaining Ball in the nucleus during interphase. Required for proper ER and nuclear envelope morphology in neuroblasts. The protein is Ankyrin repeat and LEM domain-containing protein 2 homolog of Drosophila melanogaster (Fruit fly).